A 324-amino-acid chain; its full sequence is MALMTMVQALNRALDEEMAKDPRVVVLGEDVGKRGGVFLVTEGLLQKYGPDRVMDTPLSEAAIVGAALGMAAHGLRPVAEIQFADYIFPGFDQLVSQVAKLRYRSGGQFTAPLVVRMPSGGGVRGGHHHSQSPEAHFVHTAGLKVVAVSTPYDAKGLLKAAIRDEDPVVFLEPKRLYRSVKEEVPEEDYTLSIGKAALRREGKDLTLIGYGTVMPEVLQAAAELAKAGVSAEVLDLRTLMPWDYEAVMNSVAKTGRVVLVSDAPRHASFVSEVAATIAEDLLDMLLAPPIRVTGFDTPYPYAQDKLYLPTVTRILNAAKRALDY.

Thiamine diphosphate-binding positions include Glu-29, 58-60 (LSE), Gln-82, and 86-89 (YIFP). Substrate-binding positions include 83-86 (FADY) and His-129. His-129 acts as the Proton acceptor in catalysis.

Heterotetramer of two alpha and two beta chains. Directly associated with ODBA in the E1 complex. Requires thiamine diphosphate as cofactor.

The enzyme catalyses N(6)-[(R)-lipoyl]-L-lysyl-[protein] + 3-methyl-2-oxobutanoate + H(+) = N(6)-[(R)-S(8)-2-methylpropanoyldihydrolipoyl]-L-lysyl-[protein] + CO2. In terms of biological role, the branched-chain alpha-keto dehydrogenase complex catalyzes the overall conversion of alpha-keto acids to acyl-CoA and CO(2). It contains multiple copies of three enzymatic components: branched-chain alpha-keto acid decarboxylase (E1), lipoamide acyltransferase (E2) and lipoamide dehydrogenase (E3). This chain is 2-oxoisovalerate dehydrogenase subunit beta, found in Thermus thermophilus (strain ATCC BAA-163 / DSM 7039 / HB27).